The sequence spans 853 residues: DNA mismatch repair protein MutS (853 aa).

614–621 is a binding site for ATP; sequence GPNMGGKS.

It belongs to the DNA mismatch repair MutS family.

In terms of biological role, this protein is involved in the repair of mismatches in DNA. It is possible that it carries out the mismatch recognition step. This protein has a weak ATPase activity. The polypeptide is DNA mismatch repair protein MutS (Escherichia coli O127:H6 (strain E2348/69 / EPEC)).